Consider the following 193-residue polypeptide: Peptidyl-tRNA hydrolase (193 aa).

Tyr-15 contributes to the tRNA binding site. The active-site Proton acceptor is the His-20. Phe-65, Asn-67, and Asn-113 together coordinate tRNA.

It belongs to the PTH family. Monomer.

The protein resides in the cytoplasm. It carries out the reaction an N-acyl-L-alpha-aminoacyl-tRNA + H2O = an N-acyl-L-amino acid + a tRNA + H(+). Hydrolyzes ribosome-free peptidyl-tRNAs (with 1 or more amino acids incorporated), which drop off the ribosome during protein synthesis, or as a result of ribosome stalling. Functionally, catalyzes the release of premature peptidyl moieties from peptidyl-tRNA molecules trapped in stalled 50S ribosomal subunits, and thus maintains levels of free tRNAs and 50S ribosomes. In Ehrlichia canis (strain Jake), this protein is Peptidyl-tRNA hydrolase.